We begin with the raw amino-acid sequence, 457 residues long: tRNA modification GTPase MnmE (457 aa).

Residues R25, E87, and R126 each coordinate (6S)-5-formyl-5,6,7,8-tetrahydrofolate. Residues 223–377 (GISTAIIGRP…IEERINNLFF (155 aa)) enclose the TrmE-type G domain. Position 233 (N233) interacts with K(+). Residues 233 to 238 (NVGKSS), 252 to 258 (TDIAGTT), and 277 to 280 (DTAG) each bind GTP. S237 lines the Mg(2+) pocket. Residues T252, I254, and T257 each coordinate K(+). Residue T258 participates in Mg(2+) binding. K457 is a binding site for (6S)-5-formyl-5,6,7,8-tetrahydrofolate.

It belongs to the TRAFAC class TrmE-Era-EngA-EngB-Septin-like GTPase superfamily. TrmE GTPase family. As to quaternary structure, homodimer. Heterotetramer of two MnmE and two MnmG subunits. Requires K(+) as cofactor.

The protein resides in the cytoplasm. In terms of biological role, exhibits a very high intrinsic GTPase hydrolysis rate. Involved in the addition of a carboxymethylaminomethyl (cmnm) group at the wobble position (U34) of certain tRNAs, forming tRNA-cmnm(5)s(2)U34. This is tRNA modification GTPase MnmE from Streptococcus pneumoniae serotype 2 (strain D39 / NCTC 7466).